The primary structure comprises 157 residues: Ribosomal RNA large subunit methyltransferase H (157 aa).

S-adenosyl-L-methionine-binding positions include L73, G105, and 124 to 129 (LSRMTF).

The protein belongs to the RNA methyltransferase RlmH family. In terms of assembly, homodimer.

The protein resides in the cytoplasm. The enzyme catalyses pseudouridine(1915) in 23S rRNA + S-adenosyl-L-methionine = N(3)-methylpseudouridine(1915) in 23S rRNA + S-adenosyl-L-homocysteine + H(+). Its function is as follows. Specifically methylates the pseudouridine at position 1915 (m3Psi1915) in 23S rRNA. The chain is Ribosomal RNA large subunit methyltransferase H from Porphyromonas gingivalis (strain ATCC BAA-308 / W83).